The sequence spans 274 residues: NH(3)-dependent NAD(+) synthetase (274 aa).

An ATP-binding site is contributed by 46–53 (GISGGQDS). Residue Asp-52 participates in Mg(2+) binding. A deamido-NAD(+)-binding site is contributed by Arg-140. Thr-160 contacts ATP. Glu-165 contacts Mg(2+). Deamido-NAD(+)-binding residues include Lys-173 and Asp-180. ATP contacts are provided by Lys-189 and Thr-211. 260-261 (HK) is a binding site for deamido-NAD(+).

Belongs to the NAD synthetase family. As to quaternary structure, homodimer.

The catalysed reaction is deamido-NAD(+) + NH4(+) + ATP = AMP + diphosphate + NAD(+) + H(+). It participates in cofactor biosynthesis; NAD(+) biosynthesis; NAD(+) from deamido-NAD(+) (ammonia route): step 1/1. Functionally, catalyzes the ATP-dependent amidation of deamido-NAD to form NAD. Uses ammonia as a nitrogen source. This chain is NH(3)-dependent NAD(+) synthetase, found in Pectobacterium carotovorum subsp. carotovorum (strain PC1).